The sequence spans 427 residues: Glutamate-1-semialdehyde 2,1-aminomutase (427 aa).

Residue Lys265 is modified to N6-(pyridoxal phosphate)lysine.

The protein belongs to the class-III pyridoxal-phosphate-dependent aminotransferase family. HemL subfamily. Homodimer. Pyridoxal 5'-phosphate serves as cofactor.

It is found in the cytoplasm. It carries out the reaction (S)-4-amino-5-oxopentanoate = 5-aminolevulinate. It participates in porphyrin-containing compound metabolism; protoporphyrin-IX biosynthesis; 5-aminolevulinate from L-glutamyl-tRNA(Glu): step 2/2. This chain is Glutamate-1-semialdehyde 2,1-aminomutase, found in Neisseria meningitidis serogroup B (strain ATCC BAA-335 / MC58).